The following is a 292-amino-acid chain: Shikimate dehydrogenase (NADP(+)) (292 aa).

Shikimate contacts are provided by residues 22–24 (SLS) and Ser69. Lys73 (proton acceptor) is an active-site residue. 2 residues coordinate shikimate: Asn94 and Asp111. NADP(+)-binding positions include 135 to 139 (GVGGA) and Ile236. Position 238 (Tyr238) interacts with shikimate. Position 260 (Gly260) interacts with NADP(+).

It belongs to the shikimate dehydrogenase family. As to quaternary structure, homodimer.

The enzyme catalyses shikimate + NADP(+) = 3-dehydroshikimate + NADPH + H(+). It functions in the pathway metabolic intermediate biosynthesis; chorismate biosynthesis; chorismate from D-erythrose 4-phosphate and phosphoenolpyruvate: step 4/7. In terms of biological role, involved in the biosynthesis of the chorismate, which leads to the biosynthesis of aromatic amino acids. Catalyzes the reversible NADPH linked reduction of 3-dehydroshikimate (DHSA) to yield shikimate (SA). In Streptococcus pyogenes serotype M28 (strain MGAS6180), this protein is Shikimate dehydrogenase (NADP(+)).